We begin with the raw amino-acid sequence, 550 residues long: Arginine--tRNA ligase (550 aa).

A 'HIGH' region motif is present at residues 130 to 140; that stretch reads ANPTGPIHIGG.

The protein belongs to the class-I aminoacyl-tRNA synthetase family. As to quaternary structure, monomer.

The protein localises to the cytoplasm. It carries out the reaction tRNA(Arg) + L-arginine + ATP = L-arginyl-tRNA(Arg) + AMP + diphosphate. This chain is Arginine--tRNA ligase, found in Mycolicibacterium paratuberculosis (strain ATCC BAA-968 / K-10) (Mycobacterium paratuberculosis).